The following is a 1245-amino-acid chain: Pesticidal crystal protein Cry5Ba (1245 aa).

A disordered region spans residues 1219–1245; that stretch reads PLPTDDQSSDGNTTSNTNSNTSMNNNQ. Low complexity predominate over residues 1222-1245; it reads TDDQSSDGNTTSNTNSNTSMNNNQ.

This sequence belongs to the delta endotoxin family.

Promotes colloidosmotic lysis by binding to the midgut epithelial cells of hymenopteran species. This Bacillus thuringiensis protein is Pesticidal crystal protein Cry5Ba (cry5Ba).